A 916-amino-acid polypeptide reads, in one-letter code: Isoleucine--tRNA ligase (916 aa).

The short motif at 57-67 (PYANGNLHMGH) is the 'HIGH' region element. E554 is an L-isoleucyl-5'-AMP binding site. The 'KMSKS' region motif lies at 595-599 (KMSKS). Residue K598 participates in ATP binding. Zn(2+) contacts are provided by C885, C888, C905, and C908.

Belongs to the class-I aminoacyl-tRNA synthetase family. IleS type 1 subfamily. In terms of assembly, monomer. Requires Zn(2+) as cofactor.

The protein resides in the cytoplasm. It carries out the reaction tRNA(Ile) + L-isoleucine + ATP = L-isoleucyl-tRNA(Ile) + AMP + diphosphate. In terms of biological role, catalyzes the attachment of isoleucine to tRNA(Ile). As IleRS can inadvertently accommodate and process structurally similar amino acids such as valine, to avoid such errors it has two additional distinct tRNA(Ile)-dependent editing activities. One activity is designated as 'pretransfer' editing and involves the hydrolysis of activated Val-AMP. The other activity is designated 'posttransfer' editing and involves deacylation of mischarged Val-tRNA(Ile). The sequence is that of Isoleucine--tRNA ligase from Staphylococcus haemolyticus (strain JCSC1435).